A 92-amino-acid chain; its full sequence is Small ribosomal subunit protein uS19 (92 aa).

Belongs to the universal ribosomal protein uS19 family.

Protein S19 forms a complex with S13 that binds strongly to the 16S ribosomal RNA. In Sodalis glossinidius (strain morsitans), this protein is Small ribosomal subunit protein uS19.